Consider the following 353-residue polypeptide: Ferrochelatase (353 aa).

Residues His223 and Glu304 each contribute to the Fe cation site.

The protein belongs to the ferrochelatase family.

The protein resides in the cytoplasm. It catalyses the reaction heme b + 2 H(+) = protoporphyrin IX + Fe(2+). It participates in porphyrin-containing compound metabolism; protoheme biosynthesis; protoheme from protoporphyrin-IX: step 1/1. Catalyzes the ferrous insertion into protoporphyrin IX. The protein is Ferrochelatase of Mesorhizobium japonicum (strain LMG 29417 / CECT 9101 / MAFF 303099) (Mesorhizobium loti (strain MAFF 303099)).